The following is a 146-amino-acid chain: Transcriptional regulator MraZ (146 aa).

2 SpoVT-AbrB domains span residues 6 to 49 and 78 to 121; these read TYDH…TEEE and THEV…DQKS.

It belongs to the MraZ family. As to quaternary structure, forms oligomers.

Its subcellular location is the cytoplasm. The protein resides in the nucleoid. This is Transcriptional regulator MraZ from Mesoplasma florum (strain ATCC 33453 / NBRC 100688 / NCTC 11704 / L1) (Acholeplasma florum).